We begin with the raw amino-acid sequence, 859 residues long: Leucine--tRNA ligase (859 aa).

Residues 42-52 (PYPSGRLHMGH) carry the 'HIGH' region motif. The short motif at 618 to 622 (KMSKS) is the 'KMSKS' region element. Lys-621 is a binding site for ATP.

The protein belongs to the class-I aminoacyl-tRNA synthetase family.

It is found in the cytoplasm. The enzyme catalyses tRNA(Leu) + L-leucine + ATP = L-leucyl-tRNA(Leu) + AMP + diphosphate. The polypeptide is Leucine--tRNA ligase (Shewanella putrefaciens (strain CN-32 / ATCC BAA-453)).